Consider the following 329-residue polypeptide: MASQLTDAFARKFYYLRLSITDVCNFRCTYCLPDGYKPSGVTNKGFLTVDEIRRVTRAFASLGTEKVRLTGGEPSLRRDFTDIIAAVRENDAIRQIAVTTNGYRLERDVANWRDAGLTGINVSVDSLDARQFHAITGQDKFNQVMAGIDAAFEVGFEKVKVNTVLMRDVNHHQLDTFLNWIQHRPIQLRFIELMETGEGSELFRKHHISGQVLRDELLRRGWIHQLRQRSDGPAQVFCHPDYAGEIGLIMPYEKDFCATCNRLRVSSIGKLHLCLFGEGGVNLRDLLEDDTQQQALEARISAALREKKQTHFLHQNNTGITQNLSYIGG.

The region spanning 8–234 (AFARKFYYLR…QLRQRSDGPA (227 aa)) is the Radical SAM core domain. Arg-17 provides a ligand contact to GTP. Residues Cys-24 and Cys-28 each contribute to the [4Fe-4S] cluster site. Tyr-30 provides a ligand contact to S-adenosyl-L-methionine. Residue Cys-31 participates in [4Fe-4S] cluster binding. Arg-68 contacts GTP. Residue Gly-72 coordinates S-adenosyl-L-methionine. Position 99 (Thr-99) interacts with GTP. Ser-123 lines the S-adenosyl-L-methionine pocket. Lys-160 serves as a coordination point for GTP. Met-194 is an S-adenosyl-L-methionine binding site. Positions 257 and 260 each coordinate [4Fe-4S] cluster. Position 262–264 (262–264 (RLR)) interacts with GTP. Residue Cys-274 coordinates [4Fe-4S] cluster.

The protein belongs to the radical SAM superfamily. MoaA family. Monomer and homodimer. [4Fe-4S] cluster is required as a cofactor.

The enzyme catalyses GTP + AH2 + S-adenosyl-L-methionine = (8S)-3',8-cyclo-7,8-dihydroguanosine 5'-triphosphate + 5'-deoxyadenosine + L-methionine + A + H(+). Its pathway is cofactor biosynthesis; molybdopterin biosynthesis. In terms of biological role, catalyzes the cyclization of GTP to (8S)-3',8-cyclo-7,8-dihydroguanosine 5'-triphosphate. In Shigella sonnei (strain Ss046), this protein is GTP 3',8-cyclase.